We begin with the raw amino-acid sequence, 842 residues long: Protein P (842 aa).

Residues 1–177 (MPLSYQHFRR…FCGSPYSWEQ (177 aa)) form a terminal protein domain (TP) region. A spacer region spans residues 178–345 (ELHHGAFLDG…YCLSHLVNLL (168 aa)). Residues 186–273 (DGPSRMGEES…AKNIASRSAS (88 aa)) form a disordered region. Over residues 223 to 239 (GPQSQQRPLDRSQQGRS) the composition is skewed to polar residues. The tract at residues 346–689 (EDWGPCTEHG…YLNLYPVARQ (344 aa)) is polymerase/reverse transcriptase domain (RT). Positions 356–599 (RHHIRIPRTP…YSLNFMGYVI (244 aa)) constitute a Reverse transcriptase domain. Aspartate 428, aspartate 550, and aspartate 551 together coordinate Mg(2+).

The protein belongs to the hepadnaviridae P protein family.

The enzyme catalyses DNA(n) + a 2'-deoxyribonucleoside 5'-triphosphate = DNA(n+1) + diphosphate. It catalyses the reaction Endonucleolytic cleavage to 5'-phosphomonoester.. Activated by host HSP70 and HSP40 in vitro to be able to bind the epsilon loop of the pgRNA. Because deletion of the RNase H region renders the protein partly chaperone-independent, the chaperones may be needed indirectly to relieve occlusion of the RNA-binding site by this domain. Inhibited by several reverse-transcriptase inhibitors: Lamivudine, Adefovir and Entecavir. Its function is as follows. Multifunctional enzyme that converts the viral RNA genome into dsDNA in viral cytoplasmic capsids. This enzyme displays a DNA polymerase activity that can copy either DNA or RNA templates, and a ribonuclease H (RNase H) activity that cleaves the RNA strand of RNA-DNA heteroduplexes in a partially processive 3'- to 5'-endonucleasic mode. Neo-synthesized pregenomic RNA (pgRNA) are encapsidated together with the P protein, and reverse-transcribed inside the nucleocapsid. Initiation of reverse-transcription occurs first by binding the epsilon loop on the pgRNA genome, and is initiated by protein priming, thereby the 5'-end of (-)DNA is covalently linked to P protein. Partial (+)DNA is synthesized from the (-)DNA template and generates the relaxed circular DNA (RC-DNA) genome. After budding and infection, the RC-DNA migrates in the nucleus, and is converted into a plasmid-like covalently closed circular DNA (cccDNA). The activity of P protein does not seem to be necessary for cccDNA generation, and is presumably released from (+)DNA by host nuclear DNA repair machinery. This Homo sapiens (Human) protein is Protein P.